The sequence spans 739 residues: Alcohol dehydrogenase (quinone), dehydrogenase subunit (739 aa).

Positions Met1–Ala35 are cleaved as a signal peptide. Glu97 lines the pyrroloquinoline quinone pocket. Cys143 and Cys144 are oxidised to a cystine. Arg149 is a binding site for pyrroloquinoline quinone. Glu217 provides a ligand contact to Ca(2+). Thr279 is a pyrroloquinoline quinone binding site. Ca(2+)-binding residues include Asn299 and Asp344. The active-site Proton acceptor is the Asp344. Residues Lys371 and Ile585 each contribute to the pyrroloquinoline quinone site. The 105-residue stretch at Phe635–Pro739 folds into the Cytochrome c domain. 4 residues coordinate heme c: Cys651, Cys654, His655, and Met694.

Belongs to the bacterial PQQ dehydrogenase family. As to quaternary structure, the alcohol dehydrogenase multicomponent enzyme system is composed of a dehydrogenase subunit I (AdhA) and a cytochrome c subunit II (AdhB). Requires pyrroloquinoline quinone as cofactor. It depends on Ca(2+) as a cofactor. Heme c serves as cofactor.

The protein localises to the cell membrane. The catalysed reaction is ethanol + a ubiquinone = a ubiquinol + acetaldehyde. Its function is as follows. Dehydrogenase component of the alcohol dehydrogenase multicomponent enzyme system which is involved in the production of acetic acid and in the ethanol oxidase respiratory chain. Quinohemoprotein alcohol dehydrogenase (ADH) catalyzes the oxidation of ethanol to acetaldehyde by transferring electrons to the ubiquinone embedded in the membrane phospholipids. The electrons transfer from ethanol to membranous ubiquinone occurs from pyrroloquinoline quinone (PQQ) to one heme c in subunit I (AdhA), and finally to two heme c in subunit II (AdhB). Besides ubiquinone reduction, ADH also has a ubiquinol (QH2) oxidation reaction which mediates electron transfer from ubiquinol to the non-energy generating bypass oxidase system. The electrons transfer occurs from ubiquinol (QH2) to the additional heme c within subunit II (AdhB). In Komagataeibacter europaeus (Gluconacetobacter europaeus), this protein is Alcohol dehydrogenase (quinone), dehydrogenase subunit.